The chain runs to 464 residues: GDNF family receptor alpha-2 (464 aa).

The N-terminal stretch at 1–21 is a signal peptide; sequence MILANAFCLFFFLDETLRSLA. 14 disulfide bridges follow: C40/C93, C47/C53, C63/C78, C95/C105, C161/C222, C168/C174, C185/C200, C195/C241, C224/C229, C251/C323, C258/C264, C275/C293, C285/C347, and C325/C335. The N-linked (GlcNAc...) asparagine glycan is linked to N52. The N-linked (GlcNAc...) asparagine glycan is linked to N357. Residues 363 to 392 are disordered; the sequence is MSPKGPTFSATQAPRVEKTPSLPDDLSDST. Positions 381-392 are enriched in low complexity; sequence TPSLPDDLSDST. N-linked (GlcNAc...) asparagine glycosylation is present at N413. The GPI-anchor amidated serine moiety is linked to residue S443. Residues 444–464 constitute a propeptide, removed in mature form; it reads CRARLSTALTALPLLMVTLAQ.

The protein belongs to the GDNFR family. As to quaternary structure, interacts with NRTN ligand and RET: forms a 2:2:2 ternary complex composed of NRTN ligand, GFRA2 and RET receptor. Also forms a 4:4:4 tetrameric complex composed of 4 copies of NRTN ligand, GFRA2 and RET receptor, which prevents endocytosis of RET. Interacts with SORL1. In terms of tissue distribution, neurons of the superior cervical and dorsal root ganglia, and adult brain and testis. Low level in the substantia nigra, spleen and adrenal gland. Isoform 1, isoform 2 and isoform 3 are all expressed in brain, liver, ileum, spleen, heart and kidney. In brain, isoform 1 is most abundant, isoform 2 slightly less and isoform 3 is lowest. No significant levels of isoform 1, isoform 2 or isoform 3 expression in testis.

The protein resides in the cell membrane. Receptor for neurturin (NRTN), a growth factor that supports the survival of sympathetic neurons. NRTN-binding leads to autophosphorylation and activation of the RET receptor. Also able to mediate GDNF signaling through the RET tyrosine kinase receptor. Its function is as follows. Participates in NRTN-induced 'Ser-727' phosphorylation of STAT3. The protein is GDNF family receptor alpha-2 of Mus musculus (Mouse).